Here is a 238-residue protein sequence, read N- to C-terminus: Deoxyribose-phosphate aldolase (238 aa).

Catalysis depends on Asp-102, which acts as the Proton donor/acceptor. Lys-164 acts as the Schiff-base intermediate with acetaldehyde in catalysis. The active-site Proton donor/acceptor is the Lys-193.

The protein belongs to the DeoC/FbaB aldolase family. DeoC type 1 subfamily.

It is found in the cytoplasm. It catalyses the reaction 2-deoxy-D-ribose 5-phosphate = D-glyceraldehyde 3-phosphate + acetaldehyde. Its pathway is carbohydrate degradation; 2-deoxy-D-ribose 1-phosphate degradation; D-glyceraldehyde 3-phosphate and acetaldehyde from 2-deoxy-alpha-D-ribose 1-phosphate: step 2/2. In terms of biological role, catalyzes a reversible aldol reaction between acetaldehyde and D-glyceraldehyde 3-phosphate to generate 2-deoxy-D-ribose 5-phosphate. This chain is Deoxyribose-phosphate aldolase, found in Rhodospirillum rubrum (strain ATCC 11170 / ATH 1.1.1 / DSM 467 / LMG 4362 / NCIMB 8255 / S1).